The following is a 378-amino-acid chain: Ribosomal RNA large subunit methyltransferase G (378 aa).

Belongs to the methyltransferase superfamily. RlmG family.

The protein localises to the cytoplasm. The catalysed reaction is guanosine(1835) in 23S rRNA + S-adenosyl-L-methionine = N(2)-methylguanosine(1835) in 23S rRNA + S-adenosyl-L-homocysteine + H(+). Functionally, specifically methylates the guanine in position 1835 (m2G1835) of 23S rRNA. The sequence is that of Ribosomal RNA large subunit methyltransferase G from Salmonella paratyphi B (strain ATCC BAA-1250 / SPB7).